A 200-amino-acid chain; its full sequence is DNA-directed RNA polymerase subunit 7-like protein (200 aa).

It belongs to the eukaryotic RPB7/RPC8 RNA polymerase subunit family.

It is found in the nucleus. This is DNA-directed RNA polymerase subunit 7-like protein (NRPB7L) from Arabidopsis thaliana (Mouse-ear cress).